The chain runs to 507 residues: Histidine ammonia-lyase (507 aa).

Residues 145–147 (ASG) constitute a cross-link (5-imidazolinone (Ala-Gly)). Ser-146 carries the 2,3-didehydroalanine (Ser) modification.

Belongs to the PAL/histidase family. Contains an active site 4-methylidene-imidazol-5-one (MIO), which is formed autocatalytically by cyclization and dehydration of residues Ala-Ser-Gly.

It localises to the cytoplasm. The enzyme catalyses L-histidine = trans-urocanate + NH4(+). It participates in amino-acid degradation; L-histidine degradation into L-glutamate; N-formimidoyl-L-glutamate from L-histidine: step 1/3. The polypeptide is Histidine ammonia-lyase (Treponema denticola (strain ATCC 35405 / DSM 14222 / CIP 103919 / JCM 8153 / KCTC 15104)).